The primary structure comprises 428 residues: 3-phosphoshikimate 1-carboxyvinyltransferase (428 aa).

Lys23, Ser24, and Arg28 together coordinate 3-phosphoshikimate. Lys23 is a binding site for phosphoenolpyruvate. Phosphoenolpyruvate-binding residues include Gly97 and Arg125. 7 residues coordinate 3-phosphoshikimate: Ser170, Ser171, Gln172, Ser198, Asp314, Asn337, and Lys341. Gln172 is a phosphoenolpyruvate binding site. The active-site Proton acceptor is Asp314. 3 residues coordinate phosphoenolpyruvate: Arg345, Arg387, and Lys412.

It belongs to the EPSP synthase family. In terms of assembly, monomer.

It localises to the cytoplasm. It carries out the reaction 3-phosphoshikimate + phosphoenolpyruvate = 5-O-(1-carboxyvinyl)-3-phosphoshikimate + phosphate. The protein operates within metabolic intermediate biosynthesis; chorismate biosynthesis; chorismate from D-erythrose 4-phosphate and phosphoenolpyruvate: step 6/7. In terms of biological role, catalyzes the transfer of the enolpyruvyl moiety of phosphoenolpyruvate (PEP) to the 5-hydroxyl of shikimate-3-phosphate (S3P) to produce enolpyruvyl shikimate-3-phosphate and inorganic phosphate. The sequence is that of 3-phosphoshikimate 1-carboxyvinyltransferase from Edwardsiella ictaluri (strain 93-146).